Consider the following 386-residue polypeptide: 3-ketoacyl-CoA thiolase (386 aa).

C91 acts as the Acyl-thioester intermediate in catalysis. Active-site proton acceptor residues include H342 and C372.

It belongs to the thiolase-like superfamily. Thiolase family. In terms of assembly, heterotetramer of two alpha chains (FadB) and two beta chains (FadA).

The protein resides in the cytoplasm. The catalysed reaction is an acyl-CoA + acetyl-CoA = a 3-oxoacyl-CoA + CoA. It participates in lipid metabolism; fatty acid beta-oxidation. Functionally, catalyzes the final step of fatty acid oxidation in which acetyl-CoA is released and the CoA ester of a fatty acid two carbons shorter is formed. In Colwellia psychrerythraea (strain 34H / ATCC BAA-681) (Vibrio psychroerythus), this protein is 3-ketoacyl-CoA thiolase.